The following is a 141-amino-acid chain: Small ribosomal subunit protein bS6 (141 aa).

The segment at 97–141 (TGQSEMLKAEENRSERRERRDRPEHADSADGDDSDNSDASDNADE) is disordered. A compositionally biased stretch (basic and acidic residues) spans 103 to 124 (LKAEENRSERRERRDRPEHADS). Residues 125-141 (ADGDDSDNSDASDNADE) are compositionally biased toward acidic residues.

Belongs to the bacterial ribosomal protein bS6 family.

Binds together with bS18 to 16S ribosomal RNA. This Pseudomonas fluorescens (strain ATCC BAA-477 / NRRL B-23932 / Pf-5) protein is Small ribosomal subunit protein bS6.